Reading from the N-terminus, the 227-residue chain is Cytochrome c oxidase subunit 2 (227 aa).

At 1–14 (MAYPFQLGFQDATS) the chain is on the mitochondrial intermembrane side. Residues 15–45 (PIMEELLHFHDHTLMIVFLISSLVLYIISSM) form a helical membrane-spanning segment. At 46–59 (LTTKLTHTSTMDAQ) the chain is on the mitochondrial matrix side. The helical transmembrane segment at 60-87 (EVETIWTILPAIILILIALPSLRILYMM) threads the bilayer. The Mitochondrial intermembrane portion of the chain corresponds to 88–227 (DEINNPSLTV…HFEEWSASML (140 aa)). Residues H161, C196, E198, C200, H204, and M207 each coordinate Cu cation. E198 lines the Mg(2+) pocket.

Belongs to the cytochrome c oxidase subunit 2 family. In terms of assembly, component of the cytochrome c oxidase (complex IV, CIV), a multisubunit enzyme composed of 14 subunits. The complex is composed of a catalytic core of 3 subunits MT-CO1, MT-CO2 and MT-CO3, encoded in the mitochondrial DNA, and 11 supernumerary subunits COX4I, COX5A, COX5B, COX6A, COX6B, COX6C, COX7A, COX7B, COX7C, COX8 and NDUFA4, which are encoded in the nuclear genome. The complex exists as a monomer or a dimer and forms supercomplexes (SCs) in the inner mitochondrial membrane with NADH-ubiquinone oxidoreductase (complex I, CI) and ubiquinol-cytochrome c oxidoreductase (cytochrome b-c1 complex, complex III, CIII), resulting in different assemblies (supercomplex SCI(1)III(2)IV(1) and megacomplex MCI(2)III(2)IV(2)). Found in a complex with TMEM177, COA6, COX18, COX20, SCO1 and SCO2. Interacts with TMEM177 in a COX20-dependent manner. Interacts with COX20. Interacts with COX16. Cu cation serves as cofactor.

It localises to the mitochondrion inner membrane. The catalysed reaction is 4 Fe(II)-[cytochrome c] + O2 + 8 H(+)(in) = 4 Fe(III)-[cytochrome c] + 2 H2O + 4 H(+)(out). Component of the cytochrome c oxidase, the last enzyme in the mitochondrial electron transport chain which drives oxidative phosphorylation. The respiratory chain contains 3 multisubunit complexes succinate dehydrogenase (complex II, CII), ubiquinol-cytochrome c oxidoreductase (cytochrome b-c1 complex, complex III, CIII) and cytochrome c oxidase (complex IV, CIV), that cooperate to transfer electrons derived from NADH and succinate to molecular oxygen, creating an electrochemical gradient over the inner membrane that drives transmembrane transport and the ATP synthase. Cytochrome c oxidase is the component of the respiratory chain that catalyzes the reduction of oxygen to water. Electrons originating from reduced cytochrome c in the intermembrane space (IMS) are transferred via the dinuclear copper A center (CU(A)) of subunit 2 and heme A of subunit 1 to the active site in subunit 1, a binuclear center (BNC) formed by heme A3 and copper B (CU(B)). The BNC reduces molecular oxygen to 2 water molecules using 4 electrons from cytochrome c in the IMS and 4 protons from the mitochondrial matrix. This is Cytochrome c oxidase subunit 2 (MT-CO2) from Equus caballus (Horse).